The primary structure comprises 322 residues: 8-oxo-(d)GTP phosphatase (322 aa).

Residues 1 to 21 (MMPVDDLQEIPLSKDTTEKSK) form a disordered region. Residues 22-156 (HTVRAAGAVL…DDRKVLRRFV (135 aa)) enclose the Nudix hydrolase domain. Substrate contacts are provided by residues 55–58 (RPRY), Asp-60, and 65–67 (KGK). Residues Lys-65, Glu-81, and Glu-85 each contribute to the Mg(2+) site. Positions 66–87 (GKLDQGETEPVAAAREIHEETG) match the Nudix box motif. The substrate site is built by Tyr-101, Lys-108, Glu-127, and Tyr-145. Glu-127 provides a ligand contact to Mg(2+).

The protein belongs to the Nudix hydrolase family. Forms head-to-tail homodimers. The cofactor is Mg(2+).

The catalysed reaction is 8-oxo-dGTP + H2O = 8-oxo-dGDP + phosphate + H(+). It carries out the reaction 8-oxo-GTP + H2O = 8-oxo-GDP + phosphate + H(+). It catalyses the reaction 8-oxo-dGDP + H2O = 8-oxo-dGMP + phosphate + H(+). The enzyme catalyses 8-oxo-GDP + H2O = 8-oxo-GMP + phosphate + H(+). The catalysed reaction is P(1),P(6)-bis(5'-adenosyl) hexaphosphate + H2O = 2 ATP + 2 H(+). It carries out the reaction P(1),P(5)-bis(5'-adenosyl) pentaphosphate + H2O = ADP + ATP + 2 H(+). It catalyses the reaction P(1),P(4)-bis(5'-adenosyl) tetraphosphate + H2O = AMP + ATP + 2 H(+). Its activity is regulated as follows. Ap4A hydrolysis is inhibited by fluoride ions. In terms of biological role, catalyzes the conversion of 8-oxo-dGTP to 8-oxo-dGDP, and 8-oxo-GTP to 8-oxo-GDP. At high enzyme concentrations, can also catalyze the conversion of 8-oxo-dGDP to 8-oxo-dGMP, and 8-oxo-GDP to 8-oxo-GMP. In addition, catalyzes the hydrolysis of the diadenosine polyphosphates diadenosine hexaphosphate (Ap6A), diadenosine pentaphosphate (Ap5A) and diadenosine tetraphosphate (Ap4A). This chain is 8-oxo-(d)GTP phosphatase, found in Mycolicibacterium smegmatis (strain ATCC 700084 / mc(2)155) (Mycobacterium smegmatis).